Reading from the N-terminus, the 116-residue chain is Secreted RxLR effector protein 9 (116 aa).

An N-terminal signal peptide occupies residues 1 to 17 (MRLIYIFMVSIVTTLHA). The RxLR-dEER signature appears at 49–64 (RILRGTDGNVNREQER).

It belongs to the RxLR effector family.

The protein resides in the secreted. It localises to the host cytoplasm. It is found in the host nucleus. Effector that acts as a broad suppressor of cell death to interrupt plant immunity. Inhibits cell death induced by cell death-inducing proteins, including the PAMP elicitor INF1 from P.infestans. This chain is Secreted RxLR effector protein 9, found in Plasmopara viticola (Downy mildew of grapevine).